The following is a 539-amino-acid chain: 4-hydroxybenzoate--CoA/benzoate--CoA ligase (539 aa).

Belongs to the ATP-dependent AMP-binding enzyme family. Benzoate-CoA ligase subfamily. Homodimer. In terms of processing, the N-terminus is blocked.

It carries out the reaction 4-hydroxybenzoate + ATP + CoA = 4-hydroxybenzoyl-CoA + AMP + diphosphate. The catalysed reaction is benzoate + ATP + CoA = benzoyl-CoA + AMP + diphosphate. Its function is as follows. Catalyzes the ligation of 4-hydroxybenzoate, benzoate or cyclohex-1,4-dienecarboxylate and CoA at the expense of ATP. The enzyme shows low activity towards cyclo-2,5-dienecarboxylate, 4-fluorobenzoate, 4-chlorobenzoate and 2-methoxybenzoate. In Rhodopseudomonas palustris (strain ATCC BAA-98 / CGA009), this protein is 4-hydroxybenzoate--CoA/benzoate--CoA ligase (hbaA).